We begin with the raw amino-acid sequence, 106 residues long: Iron-sulfur cluster assembly protein CyaY (106 aa).

This sequence belongs to the frataxin family.

Its function is as follows. Involved in iron-sulfur (Fe-S) cluster assembly. May act as a regulator of Fe-S biogenesis. This is Iron-sulfur cluster assembly protein CyaY from Pectobacterium carotovorum subsp. carotovorum (strain PC1).